Reading from the N-terminus, the 871-residue chain is Nonsense-mediated mRNA decay factor SMG8 (871 aa).

Positions 541–596 (LDDMELPESLQQSYTSSEDSSEDDDDFAIQTASSEDSLSGSDSYARPGSRRDEFES) are disordered. A compositionally biased stretch (low complexity) spans 573–583 (SSEDSLSGSDS).

This sequence belongs to the SMG8 family.

In terms of biological role, involved in nonsense-mediated decay (NMD) of mRNAs containing premature stop codons. Probable component of kinase complex containing smg-1 and recruited to stalled ribosomes. The sequence is that of Nonsense-mediated mRNA decay factor SMG8 (smg-8) from Caenorhabditis briggsae.